A 66-amino-acid polypeptide reads, in one-letter code: ATP synthase F(0) complex subunit 8 (66 aa).

A helical transmembrane segment spans residues 8-24 (IWLLAVVIVLTTLMIFL). K54 carries the post-translational modification N6-acetyllysine; alternate. K54 is subject to N6-succinyllysine; alternate. Position 57 is an N6-acetyllysine (K57).

Belongs to the ATPase protein 8 family. In terms of assembly, component of the ATP synthase complex composed at least of ATP5F1A/subunit alpha, ATP5F1B/subunit beta, ATP5MC1/subunit c (homooctomer), MT-ATP6/subunit a, MT-ATP8/subunit 8, ATP5ME/subunit e, ATP5MF/subunit f, ATP5MG/subunit g, ATP5MK/subunit k, ATP5MJ/subunit j, ATP5F1C/subunit gamma, ATP5F1D/subunit delta, ATP5F1E/subunit epsilon, ATP5PF/subunit F6, ATP5PB/subunit b, ATP5PD/subunit d, ATP5PO/subunit OSCP. ATP synthase complex consists of a soluble F(1) head domain (subunits alpha(3) and beta(3)) - the catalytic core - and a membrane F(0) domain - the membrane proton channel (subunits c, a, 8, e, f, g, k and j). These two domains are linked by a central stalk (subunits gamma, delta, and epsilon) rotating inside the F1 region and a stationary peripheral stalk (subunits F6, b, d, and OSCP). Interacts with PRICKLE3.

The protein localises to the mitochondrion membrane. Functionally, subunit 8, of the mitochondrial membrane ATP synthase complex (F(1)F(0) ATP synthase or Complex V) that produces ATP from ADP in the presence of a proton gradient across the membrane which is generated by electron transport complexes of the respiratory chain. ATP synthase complex consist of a soluble F(1) head domain - the catalytic core - and a membrane F(1) domain - the membrane proton channel. These two domains are linked by a central stalk rotating inside the F(1) region and a stationary peripheral stalk. During catalysis, ATP synthesis in the catalytic domain of F(1) is coupled via a rotary mechanism of the central stalk subunits to proton translocation. In vivo, can only synthesize ATP although its ATP hydrolase activity can be activated artificially in vitro. Part of the complex F(0) domain. The polypeptide is ATP synthase F(0) complex subunit 8 (Mammuthus primigenius (Siberian woolly mammoth)).